The primary structure comprises 364 residues: BTB/POZ and TAZ domain-containing protein 2 (364 aa).

One can recognise a BTB domain in the interval 34-106 (SDVEIVTSDN…LYSSSLTEDE (73 aa)). The short motif at 203–212 (RKKRRRRHRK) is the Nuclear localization signal element. The TAZ-type zinc-finger motif lies at 215 to 316 (DLYMQLSEAM…PDSCRVPLCR (102 aa)). The segment at 327–350 (KMGEDTKWKLLVTRVVSAKAMTSL) is caM-binding.

As to quaternary structure, interacts with CUL3A. Interacts with GTE11/BET10 through the BTB domain. Preferentially expressed in young leaves and roots.

The protein resides in the nucleus. Its subcellular location is the cytoplasm. It functions in the pathway protein modification; protein ubiquitination. In terms of biological role, may act as a substrate-specific adapter of an E3 ubiquitin-protein ligase complex (CUL3-RBX1-BTB) which mediates the ubiquitination and subsequent proteasomal degradation of target proteins. Plays a key role as a component of the TAC1-mediated telomerase activation pathway certainly by targeting a telomerase repressor to degradation. Seems to occupy an integral position in a complex signaling network that perceives, integrates, and responds to multiple, and sometimes competing, signals. Enhances responses to auxin in postgermination and vegetative development. Also negatively regulates ABA- and sugar-mediated inhibition of the germination. Essential for female and male gametophyte development. In Arabidopsis thaliana (Mouse-ear cress), this protein is BTB/POZ and TAZ domain-containing protein 2 (BT2).